A 578-amino-acid polypeptide reads, in one-letter code: MAFLWLFSLWLLVPGTQGTKDGDMRLVNGASANEGRVEIFYRGQWGTVCDNLWNILDANVVCRALGYENATQALGRAAFGPGRGPVMLDEVECTGTEPSLANCSSLGWLKSRCGHEKDAGVVCSNETGGVHILDLSGDLPNALGQIFDSQQGCDLFIQVTGQGHGDLTICAHKLILNTNPEAQALWQVVGSSVIMRVDAECMPVVRDFLRYFYSRRIEVTMSSVKCLHKLASAYGATQLQDYCGRLFATLLPQDPTFRTPLELYAYAQATRDSVLEDLCVQFLAWNFEPLTQAEAWLSVPTALLQALLSKSDLAVSSELDLLKAVDQWSMESSASHAEVERLLEQVRFPMVLPQELFELQFNLSLYEGHRELFQRKTMEALEFHTVPFRVLAKYRGLNLTEDTYQPRLYTSSTWSTLVTESSSRSRAAVQVYGYAQYYPYGYDSRRWYYPYQSFQTPQHPSFLFVDKLISWSATYLPTVQSCWNYGFSCTPEELPVLGLTKSSYSEPAIGYENKALMLCGGYSVVDVANFAGSKAPIPSALDTNSSKISSLFPCSSGAFSGFRVVIRPFYLTNSTDLD.

The first 18 residues, M1 to G18, serve as a signal peptide directing secretion. The region spanning M24 to S124 is the SRCR domain. 3 cysteine pairs are disulfide-bonded: C49-C113, C62-C123, and C93-C103. N-linked (GlcNAc...) asparagine glycosylation is found at N69 and N102. The BTB domain maps to C153–M221. The region spanning P260 to Q360 is the BACK domain. 2 N-linked (GlcNAc...) asparagine glycosylation sites follow: N362 and N398.

As to quaternary structure, homodimers and homomultimers. The multimers form ring-like structures with a diameter of 30-40 nm. Binds LGALS1 and LGALS3. Binds ITGB1, COL4A1, COL5A1, COL6A1, FN1 and NID. The unglycosylated form interacts with PDE4DIP; this interaction, which is PDE4DIP isoform-specific, may connect a pericentrosomal complex to the gamma-tubulin ring complex (gamma-TuRC) to promote microtubule assembly and acetylation.

The protein localises to the secreted. It localises to the extracellular space. Its subcellular location is the extracellular matrix. In terms of biological role, promotes integrin-mediated cell adhesion. May stimulate host defense against viruses and tumor cells. In Mesocricetus auratus (Golden hamster), this protein is Galectin-3-binding protein (LGALS3BP).